Consider the following 146-residue polypeptide: NADH-quinone oxidoreductase subunit A (146 aa).

Helical transmembrane passes span Phe16–Phe36, Phe68–Trp88, and Val98–Val118.

Belongs to the complex I subunit 3 family. As to quaternary structure, NDH-1 is composed of 13 different subunits. Subunits NuoA, H, J, K, L, M, N constitute the membrane sector of the complex.

It is found in the cell inner membrane. The enzyme catalyses a quinone + NADH + 5 H(+)(in) = a quinol + NAD(+) + 4 H(+)(out). Functionally, NDH-1 shuttles electrons from NADH, via FMN and iron-sulfur (Fe-S) centers, to quinones in the respiratory chain. The immediate electron acceptor for the enzyme in this species is believed to be ubiquinone. Couples the redox reaction to proton translocation (for every two electrons transferred, four hydrogen ions are translocated across the cytoplasmic membrane), and thus conserves the redox energy in a proton gradient. This chain is NADH-quinone oxidoreductase subunit A, found in Enterobacter sp. (strain 638).